Reading from the N-terminus, the 106-residue chain is Probable insulin-like peptide beta-type 1 (106 aa).

The N-terminal stretch at 1–19 is a signal peptide; the sequence is MFSFFTYFLLSALLLSASC. A propeptide spans 20-51 (removed; by convertase egl-3); it reads RQPSMDTSKADRILREIEMETELENQLSRARR. 4 disulfide bridges follow: Cys60–Cys89, Cys72–Cys102, Cys76–Cys103, and Cys88–Cys93.

The protein belongs to the insulin family. Expressed by ASI and ASJ sensory neurons and weakly by ventral cord motor neurons.

It localises to the secreted. Its function is as follows. Probable insulin-like peptide which negatively regulates synapse development at the neuromuscular junctions. Probably acts as a daf-2/InsR agonist ligand to prevent dauer formation under optimal environmental conditions. The protein is Probable insulin-like peptide beta-type 1 (ins-4) of Caenorhabditis elegans.